Here is a 318-residue protein sequence, read N- to C-terminus: Transaldolase (318 aa).

Lysine 126 acts as the Schiff-base intermediate with substrate in catalysis.

It belongs to the transaldolase family. Type 1 subfamily. As to quaternary structure, homodimer.

Its subcellular location is the cytoplasm. It catalyses the reaction D-sedoheptulose 7-phosphate + D-glyceraldehyde 3-phosphate = D-erythrose 4-phosphate + beta-D-fructose 6-phosphate. Its pathway is carbohydrate degradation; pentose phosphate pathway; D-glyceraldehyde 3-phosphate and beta-D-fructose 6-phosphate from D-ribose 5-phosphate and D-xylulose 5-phosphate (non-oxidative stage): step 2/3. Its function is as follows. Transaldolase is important for the balance of metabolites in the pentose-phosphate pathway. In Cupriavidus necator (strain ATCC 17699 / DSM 428 / KCTC 22496 / NCIMB 10442 / H16 / Stanier 337) (Ralstonia eutropha), this protein is Transaldolase.